The following is an 858-amino-acid chain: Zinc finger protein ZXDC (858 aa).

Disordered stretches follow at residues 1 to 127 (MDLP…APAG) and 151 to 174 (PGPA…STPG). Composition is skewed to low complexity over residues 23–35 (PLRR…GASP), 84–97 (GGAA…QEAE), and 151–171 (PGPA…SGPS). Ser34 carries the phosphoserine modification. Thr172 carries the post-translational modification Phosphothreonine. C2H2-type zinc fingers lie at residues 175–199 (YRCP…LLTH), 208–232 (FKCP…LQSH), 238–262 (FGCP…MKGH), 268–290 (FKCE…QRSH), 297–321 (YKCD…NRAH), 328–352 (FSCS…LRSH), 358–382 (FICD…RRKH), 388–412 (FTCP…SITH), 418–442 (FECP…SKKH), and 451–476 (SRCP…VRQH). A required for transcriptional activation region spans residues 579–688 (DSPLVLGTAA…HGLPQSTLPS (110 aa)). A Glycyl lysine isopeptide (Lys-Gly) (interchain with G-Cter in SUMO) cross-link involves residue Lys660. Disordered regions lie at residues 660–696 (KVEP…HGAQ), 726–756 (KEKK…SPPH), and 837–858 (GGPA…QDLQ). Ser665 bears the Phosphoserine mark. Positions 675-687 (QEGSHGLPQSTLP) are enriched in polar residues. An interaction with CIITA region spans residues 781 to 858 (PAAGVQCGAQ…GSTINLQDLQ (78 aa)). Polar residues predominate over residues 847-858 (FPGSTINLQDLQ).

This sequence belongs to the ZXD family. In terms of assembly, self-associates. Interacts with ZXDA and CIITA. Post-translationally, sumoylated at Lys-660 with SUMO1, SUMO2 and SUMO3; sumoylation enhances the activity of the transcriptional activation domain. As to expression, expressed at high levels in heart, kidney, liver and testis, at moderate levels in brain and stomach, and at low levels in lung, muscle, placenta, small intestine and spleen.

Its subcellular location is the nucleus. Functionally, cooperates with CIITA to promote transcription of MHC class I and MHC class II genes. The sequence is that of Zinc finger protein ZXDC (ZXDC) from Homo sapiens (Human).